Reading from the N-terminus, the 200-residue chain is NADH-quinone oxidoreductase subunit I 1 (200 aa).

4Fe-4S ferredoxin-type domains lie at 52–82 (LNRHPDGLEKCVGCELCAWACPADAIYVEGA) and 98–127 (RVYQINYARCILCGLCIEACPTRALTMTNE). Residues C62, C65, C68, C72, C107, C110, C113, and C117 each contribute to the [4Fe-4S] cluster site. The disordered stretch occupies residues 181–200 (TERQVAVSKGEKPQDEGVEA). The segment covering 189-200 (KGEKPQDEGVEA) has biased composition (basic and acidic residues).

The protein belongs to the complex I 23 kDa subunit family. In terms of assembly, NDH-1 is composed of 14 different subunits. Subunits NuoA, H, J, K, L, M, N constitute the membrane sector of the complex. The cofactor is [4Fe-4S] cluster.

Its subcellular location is the cell membrane. The enzyme catalyses a quinone + NADH + 5 H(+)(in) = a quinol + NAD(+) + 4 H(+)(out). NDH-1 shuttles electrons from NADH, via FMN and iron-sulfur (Fe-S) centers, to quinones in the respiratory chain. The immediate electron acceptor for the enzyme in this species is believed to be ubiquinone. Couples the redox reaction to proton translocation (for every two electrons transferred, four hydrogen ions are translocated across the cytoplasmic membrane), and thus conserves the redox energy in a proton gradient. The sequence is that of NADH-quinone oxidoreductase subunit I 1 from Streptomyces avermitilis (strain ATCC 31267 / DSM 46492 / JCM 5070 / NBRC 14893 / NCIMB 12804 / NRRL 8165 / MA-4680).